Reading from the N-terminus, the 391-residue chain is Na(+)/H(+) antiporter NhaA (391 aa).

11 helical membrane passes run 14–34, 59–79, 95–115, 125–145, 154–174, 180–200, 219–239, 254–274, 292–312, 328–348, and 357–377; these read GGII…LGAT, MLLW…GLEV, AFPV…YLAF, GWAI…ALLG, IFLM…IALF, SILS…LNIF, VLKS…FIPL, VLHP…NAGV, IIAG…WLAL, IMAV…ISTL, and LIVW…FVGY.

It belongs to the NhaA Na(+)/H(+) (TC 2.A.33) antiporter family.

The protein localises to the cell inner membrane. The enzyme catalyses Na(+)(in) + 2 H(+)(out) = Na(+)(out) + 2 H(+)(in). Functionally, na(+)/H(+) antiporter that extrudes sodium in exchange for external protons. This is Na(+)/H(+) antiporter NhaA from Enterobacter sp. (strain 638).